Here is a 418-residue protein sequence, read N- to C-terminus: Aminodeoxyfutalosine deaminase (418 aa).

The Zn(2+) site is built by His97 and His99. Residues Glu173 and His211 each coordinate substrate. Position 238 (His238) interacts with Zn(2+). Catalysis depends on Glu241, which acts as the Proton donor. Asp352 is a Zn(2+) binding site.

Belongs to the metallo-dependent hydrolases superfamily. It depends on Zn(2+) as a cofactor.

The catalysed reaction is 6-amino-6-deoxyfutalosine + H2O + H(+) = futalosine + NH4(+). It participates in quinol/quinone metabolism; menaquinone biosynthesis. Catalyzes the deamination of aminodeoxyfutalosine (AFL) into futalosine (FL). To a lesser extent, can also deaminate 5'-deoxyadenosine, 5'-methylthioadenosine, 2'-deoxyadenosine, adenosine, 1-(6-amino-9H-purin-9-yl)-1-deoxy-N-ethyl-beta-D-ribofuranuronamide (NECA), and S-adenosylhomocysteine. In Deinococcus radiodurans (strain ATCC 13939 / DSM 20539 / JCM 16871 / CCUG 27074 / LMG 4051 / NBRC 15346 / NCIMB 9279 / VKM B-1422 / R1), this protein is Aminodeoxyfutalosine deaminase.